The sequence spans 250 residues: DNA repair protein RecO (250 aa).

The protein belongs to the RecO family.

Involved in DNA repair and RecF pathway recombination. This is DNA repair protein RecO from Lactobacillus helveticus (strain DPC 4571).